The chain runs to 333 residues: L-lactate dehydrogenase B chain (333 aa).

NAD(+) contacts are provided by residues 29-57 (GQVGMACAISVLEKGLCDELALVDVLEDK) and arginine 99. 3 residues coordinate substrate: arginine 106, asparagine 138, and arginine 169. Residue asparagine 138 participates in NAD(+) binding. Histidine 193 (proton acceptor) is an active-site residue. Threonine 248 is a substrate binding site.

It belongs to the LDH/MDH superfamily. LDH family. As to quaternary structure, homotetramer.

It is found in the cytoplasm. The catalysed reaction is (S)-lactate + NAD(+) = pyruvate + NADH + H(+). The protein operates within fermentation; pyruvate fermentation to lactate; (S)-lactate from pyruvate: step 1/1. In terms of biological role, interconverts simultaneously and stereospecifically pyruvate and lactate with concomitant interconversion of NADH and NAD(+). The polypeptide is L-lactate dehydrogenase B chain (LDHB) (Sceloporus woodi (Florida scrub lizard)).